The following is a 275-amino-acid chain: Probable 2' cyclic ADP-D-ribose synthase TcpB (275 aa).

Residues 17-32 are compositionally biased toward basic and acidic residues; it reads RLKADDSREMSKEKQA. A disordered region spans residues 17 to 66; sequence RLKADDSREMSKEKQAQSKAHKAQQAISSAKSLSTQKSKMSELERATRDG. The span at 39-48 shows a compositional bias: low complexity; the sequence is AQQAISSAKS. Residues 55 to 64 are compositionally biased toward basic and acidic residues; sequence KMSELERATR. A TIR domain is found at 142 to 275; that stretch reads EEYDFFISHA…EIAKELHSLI (134 aa). NAD(+) contacts are provided by residues 151 to 152 and Lys181; that span reads AS. Residue Glu217 is part of the active site.

Homodimer. Interacts with host TIRAP, and probably host MYD88. Interacts with host TLR4, abolishes the interaction of host TIRAP with TLR4.

It is found in the secreted. It localises to the host cell membrane. The catalysed reaction is NAD(+) + H2O = ADP-D-ribose + nicotinamide + H(+). The enzyme catalyses NAD(+) = 2'cADPR + nicotinamide + H(+). Its function is as follows. Virulence factor that interferes with host Toll-like receptor 2 (TLR2) and TLR4 signaling, resulting in the reduction of dendritic cell maturation, inhibition of pro-inflammatory cytokine secretion and impaired NF-kappa-B activation in macrophages. Binds host lipids. Has NAD(+) hydrolase (NADase) activity, catalyzes cleavage of NAD(+) into ADP-D-ribose (ADPR) and nicotinamide, also generates a cyclization variant of cyclic ADPR (cADPR), termed v-cADPR (probably 2'cADPR). In Brucella melitensis biotype 2 (strain ATCC 23457), this protein is Probable 2' cyclic ADP-D-ribose synthase TcpB (tcpB).